The sequence spans 788 residues: Structure-specific endonuclease subunit SLX4 (788 aa).

Disordered stretches follow at residues 59-86 (LQNE…DNNR), 562-584 (KRQP…HDNS), and 599-622 (DLVN…PSSP). A compositionally biased stretch (basic and acidic residues) spans 562–573 (KRQPVDSENEIR). Positions 612–622 (DTSVLQVPSSP) are enriched in polar residues.

Belongs to the SLX4 family. In terms of assembly, forms a heterodimer with SLX1. In terms of processing, phosphorylated in response to DNA damage.

It localises to the nucleus. Its function is as follows. Regulatory subunit of the SLX1-SLX4 structure-specific endonuclease that resolves DNA secondary structures generated during DNA repair and recombination. Has endonuclease activity towards branched DNA substrates, introducing single-strand cuts in duplex DNA close to junctions with ss-DNA. The sequence is that of Structure-specific endonuclease subunit SLX4 from Debaryomyces hansenii (strain ATCC 36239 / CBS 767 / BCRC 21394 / JCM 1990 / NBRC 0083 / IGC 2968) (Yeast).